We begin with the raw amino-acid sequence, 313 residues long: Methionyl-tRNA formyltransferase (313 aa).

The segment at 32–51 (QPDRRKGRGKELQPPPAKRK) is disordered. Residue 109 to 112 (SLLP) participates in (6S)-5,6,7,8-tetrahydrofolate binding.

Belongs to the Fmt family.

It carries out the reaction L-methionyl-tRNA(fMet) + (6R)-10-formyltetrahydrofolate = N-formyl-L-methionyl-tRNA(fMet) + (6S)-5,6,7,8-tetrahydrofolate + H(+). In terms of biological role, attaches a formyl group to the free amino group of methionyl-tRNA(fMet). The formyl group appears to play a dual role in the initiator identity of N-formylmethionyl-tRNA by promoting its recognition by IF2 and preventing the misappropriation of this tRNA by the elongation apparatus. The polypeptide is Methionyl-tRNA formyltransferase (Natranaerobius thermophilus (strain ATCC BAA-1301 / DSM 18059 / JW/NM-WN-LF)).